Here is a 476-residue protein sequence, read N- to C-terminus: Hyaluronidase-2 (476 aa).

Residues 1-20 (MWTGLGPAVTLALVLVVAWA) form the signal peptide. 2 cysteine pairs are disulfide-bonded: Cys47–Cys343 and Cys214–Cys230. N-linked (GlcNAc...) asparagine glycosylation is found at Asn77 and Asn106. Residue Glu138 is the Proton donor of the active site. 2 N-linked (GlcNAc...) asparagine glycosylation sites follow: Asn340 and Asn360. Residues 364-442 (AAQYCSWAQC…YLGWGGEQCQ (79 aa)) enclose the EGF-like domain. Cystine bridges form between Cys368–Cys379, Cys373–Cys430, and Cys432–Cys441. Gly451 carries the GPI-anchor amidated glycine lipid modification. The propeptide at 452 to 476 (ASGAWAGSHLTGLLAVAVLAFTWTS) is removed in mature form.

Belongs to the glycosyl hydrolase 56 family. Interacts with MST1R. In terms of assembly, (Microbial infection) Interacts with Jaagsiekte sheep retrovirus (JSRV) envelope proteins.

It localises to the cell membrane. It carries out the reaction Random hydrolysis of (1-&gt;4)-linkages between N-acetyl-beta-D-glucosamine and D-glucuronate residues in hyaluronate.. Functionally, catalyzes hyaluronan degradation into small fragments that are endocytosed and degraded in lysosomes by HYAL1 and exoglycosidases. Essential for the breakdown of extracellular matrix hyaluronan. The protein is Hyaluronidase-2 (HYAL2) of Ovis aries (Sheep).